Reading from the N-terminus, the 372-residue chain is 1,3,6,8-tetrahydroxynaphthalene synthase (372 aa).

Residue Cys-138 is part of the active site.

The protein belongs to the thiolase-like superfamily. Chalcone/stilbene synthases family. Homodimer.

The catalysed reaction is 5 malonyl-CoA + 5 H(+) = naphthalene-1,3,6,8-tetrol + 5 CO2 + 5 CoA + H2O. It participates in pigment biosynthesis; melanin biosynthesis. Involved in the biosynthesis of melanin but also various secondary metabolites containing a naphthoquinone ring. Catalyzes the iterative condensation of five CoA-linked malonyl units to form a pentaketide intermediate. THNS subsequently catalyzes the dual intramolecular Claisen and aldol condensations of this linear intermediate to produce the fused ring of 1,3,6,8-tetrahydroxynaphthalene (THN). In Streptomyces griseus, this protein is 1,3,6,8-tetrahydroxynaphthalene synthase.